The sequence spans 192 residues: Imidazole glycerol phosphate synthase subunit HisH (192 aa).

Residues 1 to 192 (MIAIIDYGLG…QALKGGFIND (192 aa)) enclose the Glutamine amidotransferase type-1 domain. The active-site Nucleophile is cysteine 77. Active-site residues include histidine 169 and glutamate 171.

In terms of assembly, heterodimer of HisH and HisF.

It localises to the cytoplasm. The catalysed reaction is 5-[(5-phospho-1-deoxy-D-ribulos-1-ylimino)methylamino]-1-(5-phospho-beta-D-ribosyl)imidazole-4-carboxamide + L-glutamine = D-erythro-1-(imidazol-4-yl)glycerol 3-phosphate + 5-amino-1-(5-phospho-beta-D-ribosyl)imidazole-4-carboxamide + L-glutamate + H(+). It catalyses the reaction L-glutamine + H2O = L-glutamate + NH4(+). It functions in the pathway amino-acid biosynthesis; L-histidine biosynthesis; L-histidine from 5-phospho-alpha-D-ribose 1-diphosphate: step 5/9. IGPS catalyzes the conversion of PRFAR and glutamine to IGP, AICAR and glutamate. The HisH subunit catalyzes the hydrolysis of glutamine to glutamate and ammonia as part of the synthesis of IGP and AICAR. The resulting ammonia molecule is channeled to the active site of HisF. The protein is Imidazole glycerol phosphate synthase subunit HisH of Staphylococcus epidermidis (strain ATCC 12228 / FDA PCI 1200).